Consider the following 416-residue polypeptide: Solute carrier family 35 member D3 (416 aa).

Transmembrane regions (helical) follow at residues 9–29 (VLGISVAIAHGVFSGSLNILL), 38–58 (FSFLTLVQCLTSSTAALSLEL), 64–84 (LIAVPPFGLSLARSFAGVAVL), 103–123 (MYVVFKRCLPLVTMLIGVLVL), 131–151 (GVLAAVLITTCGAALAGAGDL), 155–175 (PIGYVTGVLAVLVHAAYLVLI), 187–207 (LTAQYVIAVSATPLLVICSFA), 224–244 (AMVCIFVACILIGCAMNFTTL), 257–277 (FVGVVKSIATITVGMVAFSDV), and 280–300 (TSLFIAGVVVNTLGSIIYCVA). The segment at 334-384 (MEELPGEGGNGRSEGGEAAGGPAQESRQEVRGSPRGVPLVAGSSEEGSRRS) is disordered. Positions 339 to 352 (GEGGNGRSEGGEAA) are enriched in gly residues.

Belongs to the TPT transporter family. SLC35D subfamily. In terms of assembly, could interact with ATG14, BECN1 and PIK3C3 that form the PI3KC3-C1/AIC/autophagy initiation complex; enhancing the formation of the AIC and promoting autophagy.

It is found in the cytoplasmic vesicle. It localises to the secretory vesicle. Its subcellular location is the synaptic vesicle membrane. The protein resides in the early endosome membrane. The protein localises to the endoplasmic reticulum membrane. It carries out the reaction UDP-alpha-D-glucose(in) = UDP-alpha-D-glucose(out). With respect to regulation, inhibited by proton uncouplers that directly abolish the proton electrochemical gradient. Functionally, probable UDP-glucose transmembrane transporter involved in UDP-glucose transport from the cytosol to the lumen of synaptic vesicles. It is involved in platelet dense granules maturation. Its function is as follows. Alternatively, could function as a molecular adapter enhancing the formation of the PI3KC3-C1/AIC/autophagy initiation complex to promote autophagy in dopaminergic neurons. Could also regulate the plasma membrane localization of the D(1A) dopamine receptor/DRD1 and dopamine signaling. In Homo sapiens (Human), this protein is Solute carrier family 35 member D3.